A 239-amino-acid polypeptide reads, in one-letter code: MLRRLSPIQPDSFEFTPANLEWARAQMTKYPEGRQQSAIIPVLWRAQEQEGWLSRPAIEYCADLLGMPYIRALEVATFYFMFQLQPVGSVAHIQICGTTTCMICGAEDLIRVCKEKIAPEPHALSADGRFSWEEVECLGACTNAPMAQIGKDFYEDLTVEKLAALIDRFAAGEVPVPGPQNGRFSAEALGGPTALADLKGGEAHNASVARALRLGDSIKRIDGTEVPITTPWLATQNGV.

The [2Fe-2S] cluster site is built by C96, C101, C137, and C141.

This sequence belongs to the complex I 24 kDa subunit family. In terms of assembly, NDH-1 is composed of at least 14 different subunits, Nqo1 to Nqo14. The complex has a L-shaped structure, with the hydrophobic arm (subunits Nqo7, Nqo8, Nqo10 to Nqo14) embedded in the inner membrane and the hydrophilic peripheral arm (subunits Nqo1 to Nqo6, Nqo9) protruding into the bacterial cytoplasm. The hydrophilic domain contains all the redox centers. It depends on [2Fe-2S] cluster as a cofactor.

The protein localises to the cell inner membrane. The catalysed reaction is a quinone + NADH + 5 H(+)(in) = a quinol + NAD(+) + 4 H(+)(out). Functionally, NDH-1 shuttles electrons from NADH, via FMN and iron-sulfur (Fe-S) centers, to quinones in the respiratory chain. The immediate electron acceptor for the enzyme in this species is believed to be ubiquinone. Couples the redox reaction to proton translocation (for every two electrons transferred, four hydrogen ions are translocated across the cytoplasmic membrane), and thus conserves the redox energy in a proton gradient. The polypeptide is NADH-quinone oxidoreductase chain 2 (nqo2) (Paracoccus denitrificans).